Reading from the N-terminus, the 555-residue chain is Disabled homolog 1 (555 aa).

A disordered region spans residues 1 to 26 (MSTETELQVAVKTSAKKDSRKKGQDR). A compositionally biased stretch (basic and acidic residues) spans 15–26 (AKKDSRKKGQDR). Positions 36 to 189 (KGEGVRYKAK…CEQAVYQTIL (154 aa)) constitute a PID domain. Phosphotyrosine is present on residues tyrosine 198, tyrosine 220, and tyrosine 232. Disordered regions lie at residues 384-410 (LTPL…RQKM), 418-437 (FQMA…PSLT), and 468-555 (NLTP…QAGS). Positions 391-403 (PGTSDSTRPSPQT) are enriched in polar residues. Low complexity-rich tracts occupy residues 470–479 (TPVTSTTPST) and 487–501 (PRQS…SHAS). The residue at position 491 (serine 491) is a Phosphoserine; by CDK5. Residues 504–513 (TTDDIFEEGF) show a composition bias toward acidic residues.

As to quaternary structure, associates with the SH2 domains of SRC, FYN and ABL. Interacts (phosphorylated on tyrosine residues) with CRK and CRKL (via respective SH2 domain). Interacts with DAB2IP, SIAH1, LRP8 and VLDLR. Interacts with LRP1. Interacts with APLP1 (via NPXY motif). Interacts with DAB2IP. Interacts with ZSWIM8. Phosphorylated by FYN on Tyr-198 and Tyr-220 upon reelin induction in embryonic neurons. Also phosphorylated on Ser-491 independently of reelin signaling. Post-translationally, ubiquitinated by various cullin-5-RING E3 ubiquitin-protein ligase complexes (ECS complexes) following ligand-binding and phosphorylation, leading to its degradation. Ubiquitinated by the ECS(SOCS7) complex in the cortical plate of the developing cerebral cortex following ligand-binding and phosphorylation by FYN, leading to its degradation by the proteasome. Recognized by ZSWIM8 through a disorder targets misorder mechanism that eliminates misfolded DAB1 via ubiquitination and proteasomal degradation.

Its subcellular location is the cytoplasm. Signaling adapter of the reelin-mediated signaling pathway, which regulates the migration and differentiation of postmitotic neurons during brain development. Mediates intracellular transduction of Reelin signaling following reelin (RELN)-binding to its receptor: acts by docking proteins through its phosphotyrosine residues and PID domain. The sequence is that of Disabled homolog 1 (DAB1) from Macaca fascicularis (Crab-eating macaque).